The primary structure comprises 239 residues: Purine nucleoside phosphorylase DeoD-type (239 aa).

H5 contributes to the a purine D-ribonucleoside binding site. Phosphate-binding positions include G21, R25, R44, and 88-91; that span reads RVGS. A purine D-ribonucleoside-binding positions include 180–182 and 204–205; these read EME and SD. Catalysis depends on D205, which acts as the Proton donor.

It belongs to the PNP/UDP phosphorylase family. In terms of assembly, homohexamer; trimer of homodimers.

The catalysed reaction is a purine D-ribonucleoside + phosphate = a purine nucleobase + alpha-D-ribose 1-phosphate. The enzyme catalyses a purine 2'-deoxy-D-ribonucleoside + phosphate = a purine nucleobase + 2-deoxy-alpha-D-ribose 1-phosphate. Its function is as follows. Catalyzes the reversible phosphorolytic breakdown of the N-glycosidic bond in the beta-(deoxy)ribonucleoside molecules, with the formation of the corresponding free purine bases and pentose-1-phosphate. The protein is Purine nucleoside phosphorylase DeoD-type of Erwinia tasmaniensis (strain DSM 17950 / CFBP 7177 / CIP 109463 / NCPPB 4357 / Et1/99).